The chain runs to 199 residues: MDTLFNSTEKNARGIPQAPFIENVNEIIKDPSDFELCFNKFQERLSKYKFMQESKLATIKQLKTRIPDLENTLKICQSLRNHSDEGDESDEPILLHYQLNDTLYTKAQVDIPEDRADLKVGLWLGADVMLEYPIDEAIELLKKKLADSEQSLTVSTEDVEFLRENITTMEVNCARLYNWDVQRRQDLKQAQEGTKNLKI.

Met1 carries the post-translational modification N-acetylmethionine.

The protein belongs to the prefoldin subunit alpha family. As to quaternary structure, heterohexamer of two PFD-alpha type and four PFD-beta type subunits.

Functionally, binds specifically to cytosolic chaperonin (c-CPN) and transfers target proteins to it. Binds to nascent polypeptide chain and promotes folding in an environment in which there are many competing pathways for nonnative proteins. This chain is Prefoldin subunit 3 (PAC10), found in Saccharomyces cerevisiae (strain ATCC 204508 / S288c) (Baker's yeast).